A 111-amino-acid chain; its full sequence is Secreted RxLR effector protein 81 (111 aa).

An N-terminal signal peptide occupies residues 1 to 16; that stretch reads MLVSMLLIIFPNGVSL. Residue N52 is glycosylated (N-linked (GlcNAc...) asparagine). Positions 73–92 are disordered; sequence KKFSSSDEDKSRDVRRRLRP. A RxLR-dEER motif is present at residues 88 to 91; that stretch reads RRLR.

The protein belongs to the RxLR effector family.

The protein localises to the secreted. It is found in the host nucleus. The protein resides in the host cytoplasm. Secreted effector that partially suppresses the host cell death induced by cell death-inducing proteins. The polypeptide is Secreted RxLR effector protein 81 (Plasmopara viticola (Downy mildew of grapevine)).